We begin with the raw amino-acid sequence, 513 residues long: Butyrophilin subfamily 3 member A1 (513 aa).

A signal peptide spans 1 to 29; the sequence is MKMASFLAFLLLNFRVCLLLLQLLMPHSA. Ig-like V-type domains are found at residues 30–139 and 145–236; these read QFSV…KALV and ALGS…ASIS. The Extracellular segment spans residues 30-254; that stretch reads QFSVLGPSGP…AQRWIAALAG (225 aa). Cystine bridges form between C52-C126 and C166-C220. N115 carries an N-linked (GlcNAc...) asparagine glycan. Residues 255–271 traverse the membrane as a helical segment; that stretch reads TLPVLLLLLGGAGYFLW. The Cytoplasmic portion of the chain corresponds to 272-513; sequence QQQEEKKTQF…EPTALTICPA (242 aa). The 192-residue stretch at 322–513 folds into the B30.2/SPRY domain; that stretch reads RGERHSAYNE…EPTALTICPA (192 aa).

This sequence belongs to the immunoglobulin superfamily. BTN/MOG family. In terms of assembly, homodimer. In terms of processing, N-glycosylated. As to expression, detected on T-cells, natural killer cells, dendritic cells and macrophages (at protein level). Ubiquitous. Highly expressed in heart, pancreas and lung, Moderately expressed in placenta, liver and muscle.

It localises to the cell membrane. In terms of biological role, plays a role in T-cell activation and in the adaptive immune response. Regulates the proliferation of activated T-cells. Regulates the release of cytokines and IFNG by activated T-cells. Mediates the response of T-cells toward infected and transformed cells that are characterized by high levels of phosphorylated metabolites, such as isopentenyl pyrophosphate. The polypeptide is Butyrophilin subfamily 3 member A1 (BTN3A1) (Homo sapiens (Human)).